The primary structure comprises 331 residues: DNA-directed RNA polymerase subunit alpha (331 aa).

The segment at 1-223 is alpha N-terminal domain (alpha-NTD); sequence MDQKRPQLKA…DELTVFGNVE (223 aa). The alpha C-terminal domain (alpha-CTD) stretch occupies residues 260-331; the sequence is PYPADLDTPR…LAQFGLALRD (72 aa).

The protein belongs to the RNA polymerase alpha chain family. Homodimer. The RNAP catalytic core consists of 2 alpha, 1 beta, 1 beta' and 1 omega subunit. When a sigma factor is associated with the core the holoenzyme is formed, which can initiate transcription.

It carries out the reaction RNA(n) + a ribonucleoside 5'-triphosphate = RNA(n+1) + diphosphate. Functionally, DNA-dependent RNA polymerase catalyzes the transcription of DNA into RNA using the four ribonucleoside triphosphates as substrates. The polypeptide is DNA-directed RNA polymerase subunit alpha (Deinococcus geothermalis (strain DSM 11300 / CIP 105573 / AG-3a)).